We begin with the raw amino-acid sequence, 361 residues long: (S)-coclaurine N-methyltransferase (361 aa).

S-adenosyl-L-methionine contacts are provided by Ser101, Gly139, Asn163, Gln167, Asp189, Ile190, and Val205. Cys336 is a catalytic residue.

Belongs to the CFA/CMAS family. Homodimer. In terms of tissue distribution, highly expressed in rhizomes. Detected in roots, petioles, flower buds and leaves. Expressed between the developing stele and ground tissues near the root apical meristem, in the immature endodermis, the pericycle and the spokes of developing xylem in the apical region of the root and in the protoderm of leaf primordia in rhizomes.

It localises to the cytoplasm. The enzyme catalyses norreticuline + S-adenosyl-L-methionine = reticuline + S-adenosyl-L-homocysteine + H(+). It carries out the reaction (S)-coclaurine + S-adenosyl-L-methionine = (S)-N-methylcoclaurine + S-adenosyl-L-homocysteine + H(+). The catalysed reaction is heliamine + S-adenosyl-L-methionine = N-methylheliamine + S-adenosyl-L-homocysteine + H(+). It functions in the pathway alkaloid biosynthesis. Functionally, involved in the biosynthesis of protoberberine alkaloids. N-methyltransferase with a substrate preference for (R,S)-norreticuline but also active with dimethoxytetrahydroisoquinoline. This Thalictrum flavum subsp. glaucum (Yellow meadow rue) protein is (S)-coclaurine N-methyltransferase.